Here is a 765-residue protein sequence, read N- to C-terminus: FHF complex subunit HOOK interacting protein 2A (765 aa).

Disordered regions lie at residues 193–236 and 532–561; these read TLKG…DHLS and TDIS…KNDG. Composition is skewed to polar residues over residues 196–208 and 535–550; these read GQDS…GQSR and SPEN…SSSP.

It belongs to the FHIP family. Expressed in all tissues tested, highly expressed brain. In terms of tissue distribution, only detected at high levels in testis.

Required for proper functioning of the nervous system. The polypeptide is FHF complex subunit HOOK interacting protein 2A (Homo sapiens (Human)).